A 399-amino-acid polypeptide reads, in one-letter code: Phosphoglycerate kinase (399 aa).

Substrate contacts are provided by residues 24-26 (DLN), R41, 64-67 (HLGR), R123, and R160. Residues K210, G298, E329, and 355 to 358 (GGDS) contribute to the ATP site.

This sequence belongs to the phosphoglycerate kinase family. Monomer.

The protein resides in the cytoplasm. The catalysed reaction is (2R)-3-phosphoglycerate + ATP = (2R)-3-phospho-glyceroyl phosphate + ADP. It participates in carbohydrate degradation; glycolysis; pyruvate from D-glyceraldehyde 3-phosphate: step 2/5. This is Phosphoglycerate kinase from Salinispora tropica (strain ATCC BAA-916 / DSM 44818 / JCM 13857 / NBRC 105044 / CNB-440).